We begin with the raw amino-acid sequence, 153 residues long: Insulin-like growth factor 1 (153 aa).

The interval 49-77 (GPETLCGAELVDALQFVCGDRGFYFNKPT) is b. 3 cysteine pairs are disulfide-bonded: C54–C96, C66–C109, and C95–C100. Residues 78-89 (GYGSSSRRAPQT) form a c region. Residues 90-110 (GIVDECCFRSCDLRRLEMYCA) are a. The interval 111–118 (PLKPAKSA) is d. A propeptide spans 119–153 (RSVRAQRHTDMPKAQKEVHLKNTSRGSSGNKNYRM) (e peptide). The tract at residues 120–153 (SVRAQRHTDMPKAQKEVHLKNTSRGSSGNKNYRM) is disordered. The span at 125 to 138 (RHTDMPKAQKEVHL) shows a compositional bias: basic and acidic residues. Positions 139 to 153 (KNTSRGSSGNKNYRM) are enriched in polar residues.

It belongs to the insulin family. In terms of assembly, forms a ternary complex with IGFR1 and ITGAV:ITGB3. Forms a ternary complex with IGFR1 and ITGA6:ITGB4. Forms a ternary complex with IGFBP3 and ALS.

It is found in the secreted. The insulin-like growth factors, isolated from plasma, are structurally and functionally related to insulin but have a much higher growth-promoting activity. May be a physiological regulator of [1-14C]-2-deoxy-D-glucose (2DG) transport and glycogen synthesis in osteoblasts. Stimulates glucose transport in bone-derived osteoblastic (PyMS) cells and is effective at much lower concentrations than insulin, not only regarding glycogen and DNA synthesis but also with regard to enhancing glucose uptake. May play a role in synapse maturation. Ca(2+)-dependent exocytosis of IGF1 is required for sensory perception of smell in the olfactory bulb. Acts as a ligand for IGF1R. Binds to the alpha subunit of IGF1R, leading to the activation of the intrinsic tyrosine kinase activity which autophosphorylates tyrosine residues in the beta subunit thus initiating a cascade of down-stream signaling events leading to activation of the PI3K-AKT/PKB and the Ras-MAPK pathways. Binds to integrins ITGAV:ITGB3 and ITGA6:ITGB4. Its binding to integrins and subsequent ternary complex formation with integrins and IGFR1 are essential for IGF1 signaling. Induces the phosphorylation and activation of IGFR1, MAPK3/ERK1, MAPK1/ERK2 and AKT1. As part of the MAPK/ERK signaling pathway, acts as a negative regulator of apoptosis in cardiomyocytes via promotion of STUB1/CHIP-mediated ubiquitination and degradation of ICER-type isoforms of CREM. The sequence is that of Insulin-like growth factor 1 from Sus scrofa (Pig).